The following is a 349-amino-acid chain: MAKAGEKSVGGGKRGLKRKAAAEEPQEAAAASDGTAESGVQPAKAAAFPPGFSISEIKNKQRRHLMFTRWKQQQRKEKLAAKKKLKKEREALGDKAPPKPVPKTIDNQRVYDETTVDPNDEEVAYDEATDEFASYFNRQTSPKILITTSDRPHGRTVRLCEQLSTVIPDSHVYYRRGLALKKIIPQCIARDFTDLIVINEDRKTPNGLILSHLPNGPTAHFKMSSVRLRKEIKRRGKDPTEHVPEIILNNFTTRLGHSIGRMFASLFPHNPQFIGRQVATFHNQRDYIFFRFHRYIFKSEKKVGIQELGPRFTLKLRSLQKGTFDSKYGEYEWVHKPREMDTSRRKFHL.

Disordered stretches follow at residues 1–58 (MAKA…SEIK) and 71–105 (KQQQRKEKLAAKKKLKKEREALGDKAPPKPVPKTI). Positions 87-97 (KEREALGDKAP) are enriched in basic and acidic residues. In terms of domain architecture, Brix spans 142–325 (PKILITTSDR…LRSLQKGTFD (184 aa)). The RNA-binding stretch occupies residues 303-320 (VGIQELGPRFTLKLRSLQ).

Its subcellular location is the nucleus. It is found in the nucleolus. Its function is as follows. May be required for ribosome biogenesis. The polypeptide is Ribosome production factor 1 (Rpf1) (Mus musculus (Mouse)).